The primary structure comprises 432 residues: Adenylosuccinate synthetase (432 aa).

GTP is bound by residues 13–19 and 41–43; these read GDEGKGK and GHT. The active-site Proton acceptor is Asp-14. The Mg(2+) site is built by Asp-14 and Gly-41. Residues 14–17, 39–42, Thr-130, Arg-144, Gln-225, Thr-240, and Arg-304 contribute to the IMP site; these read DEGK and NAGH. His-42 acts as the Proton donor in catalysis. 300–306 contributes to the substrate binding site; sequence ATTGRKR. GTP-binding positions include Arg-306, 332-334, and 415-417; these read KLD and STG.

The protein belongs to the adenylosuccinate synthetase family. In terms of assembly, homodimer. Requires Mg(2+) as cofactor.

The protein resides in the cytoplasm. It carries out the reaction IMP + L-aspartate + GTP = N(6)-(1,2-dicarboxyethyl)-AMP + GDP + phosphate + 2 H(+). It functions in the pathway purine metabolism; AMP biosynthesis via de novo pathway; AMP from IMP: step 1/2. Functionally, plays an important role in the de novo pathway of purine nucleotide biosynthesis. Catalyzes the first committed step in the biosynthesis of AMP from IMP. The chain is Adenylosuccinate synthetase from Photobacterium profundum (strain SS9).